A 445-amino-acid chain; its full sequence is T-box transcription factor TBX19 (445 aa).

Residues 45 to 218 (LEDAPLWQRF…YNPFAKAFLD (174 aa)) constitute a DNA-binding region (T-box).

It is found in the nucleus. Its function is as follows. Transcriptional regulator involved in developmental processes. Can activate POMC gene expression and repress the alpha glycoprotein subunit and thyroid-stimulating hormone beta promoters. The polypeptide is T-box transcription factor TBX19 (Canis lupus familiaris (Dog)).